The chain runs to 404 residues: S-adenosylmethionine synthase (404 aa).

His-17 lines the ATP pocket. Residue Asp-19 coordinates Mg(2+). Glu-45 is a binding site for K(+). L-methionine is bound by residues Glu-58 and Gln-101. A flexible loop region spans residues 101–111 (QSPDIAMGVDQ). ATP-binding positions include 177–179 (DGK), 244–245 (RF), Asp-253, 259–260 (RK), Ala-276, and Lys-280. Asp-253 is an L-methionine binding site. An L-methionine-binding site is contributed by Lys-284.

This sequence belongs to the AdoMet synthase family. In terms of assembly, homotetramer; dimer of dimers. Requires Mg(2+) as cofactor. K(+) serves as cofactor.

Its subcellular location is the cytoplasm. It catalyses the reaction L-methionine + ATP + H2O = S-adenosyl-L-methionine + phosphate + diphosphate. Its pathway is amino-acid biosynthesis; S-adenosyl-L-methionine biosynthesis; S-adenosyl-L-methionine from L-methionine: step 1/1. Functionally, catalyzes the formation of S-adenosylmethionine (AdoMet) from methionine and ATP. The overall synthetic reaction is composed of two sequential steps, AdoMet formation and the subsequent tripolyphosphate hydrolysis which occurs prior to release of AdoMet from the enzyme. The polypeptide is S-adenosylmethionine synthase (Geobacillus thermodenitrificans (strain NG80-2)).